The sequence spans 190 residues: Adenine phosphoribosyltransferase (190 aa).

This sequence belongs to the purine/pyrimidine phosphoribosyltransferase family. Homodimer.

It localises to the cytoplasm. The catalysed reaction is AMP + diphosphate = 5-phospho-alpha-D-ribose 1-diphosphate + adenine. It functions in the pathway purine metabolism; AMP biosynthesis via salvage pathway; AMP from adenine: step 1/1. In terms of biological role, catalyzes a salvage reaction resulting in the formation of AMP, that is energically less costly than de novo synthesis. This Cupriavidus necator (strain ATCC 17699 / DSM 428 / KCTC 22496 / NCIMB 10442 / H16 / Stanier 337) (Ralstonia eutropha) protein is Adenine phosphoribosyltransferase.